Consider the following 538-residue polypeptide: CTP synthase (538 aa).

Residues 1-266 (MRTKYIFITG…DQKIVDLLNI (266 aa)) are amidoligase domain. Ser14 provides a ligand contact to CTP. Ser14 serves as a coordination point for UTP. Residues 15 to 20 (SLGKGL) and Asp72 contribute to the ATP site. Asp72 and Glu140 together coordinate Mg(2+). Residues 147 to 149 (DIE), 187 to 192 (KTKPTQ), and Lys223 contribute to the CTP site. Residues 187–192 (KTKPTQ) and Lys223 each bind UTP. 239 to 241 (KDV) serves as a coordination point for ATP. A Glutamine amidotransferase type-1 domain is found at 291-533 (NIAIVGKYVN…IEAALRYRKK (243 aa)). Gly353 is an L-glutamine binding site. Residue Cys380 is the Nucleophile; for glutamine hydrolysis of the active site. L-glutamine contacts are provided by residues 381–384 (LGMQ), Glu404, and Arg461. Catalysis depends on residues His506 and Glu508.

This sequence belongs to the CTP synthase family. In terms of assembly, homotetramer.

It catalyses the reaction UTP + L-glutamine + ATP + H2O = CTP + L-glutamate + ADP + phosphate + 2 H(+). It carries out the reaction L-glutamine + H2O = L-glutamate + NH4(+). The enzyme catalyses UTP + NH4(+) + ATP = CTP + ADP + phosphate + 2 H(+). The protein operates within pyrimidine metabolism; CTP biosynthesis via de novo pathway; CTP from UDP: step 2/2. With respect to regulation, allosterically activated by GTP, when glutamine is the substrate; GTP has no effect on the reaction when ammonia is the substrate. The allosteric effector GTP functions by stabilizing the protein conformation that binds the tetrahedral intermediate(s) formed during glutamine hydrolysis. Inhibited by the product CTP, via allosteric rather than competitive inhibition. Its function is as follows. Catalyzes the ATP-dependent amination of UTP to CTP with either L-glutamine or ammonia as the source of nitrogen. Regulates intracellular CTP levels through interactions with the four ribonucleotide triphosphates. The protein is CTP synthase of Syntrophus aciditrophicus (strain SB).